The following is a 427-amino-acid chain: 3-phosphoshikimate 1-carboxyvinyltransferase (427 aa).

3-phosphoshikimate is bound by residues Lys-22, Ser-23, and Arg-27. Lys-22 serves as a coordination point for phosphoenolpyruvate. Gly-96 and Arg-124 together coordinate phosphoenolpyruvate. 3-phosphoshikimate is bound by residues Ser-170, Ser-171, Gln-172, Ser-199, Asp-313, Asn-336, and Lys-340. Gln-172 provides a ligand contact to phosphoenolpyruvate. The active-site Proton acceptor is the Asp-313. Arg-344, Arg-386, and Lys-411 together coordinate phosphoenolpyruvate.

It belongs to the EPSP synthase family. As to quaternary structure, monomer.

The protein resides in the cytoplasm. The catalysed reaction is 3-phosphoshikimate + phosphoenolpyruvate = 5-O-(1-carboxyvinyl)-3-phosphoshikimate + phosphate. Its pathway is metabolic intermediate biosynthesis; chorismate biosynthesis; chorismate from D-erythrose 4-phosphate and phosphoenolpyruvate: step 6/7. Functionally, catalyzes the transfer of the enolpyruvyl moiety of phosphoenolpyruvate (PEP) to the 5-hydroxyl of shikimate-3-phosphate (S3P) to produce enolpyruvyl shikimate-3-phosphate and inorganic phosphate. The protein is 3-phosphoshikimate 1-carboxyvinyltransferase of Aeromonas salmonicida.